The primary structure comprises 383 residues: BRISC and BRCA1-A complex member 2 (383 aa).

The residue at position 1 (M1) is an N-acetylmethionine. S2 is subject to Phosphoserine. UEV-like stretches follow at residues 30–147 and 275–364; these read DATN…TLLE and IAAF…RAKA.

The protein belongs to the BABAM2 family. As to quaternary structure, component of the ARISC complex, at least composed of UIMC1/RAP80, ABRAXAS1, BRCC3/BRCC36, BABAM2 and BABAM1/NBA1. Component of the BRCA1-A complex, at least composed of BRCA1, BARD1, UIMC1/RAP80, ABRAXAS1, BRCC3/BRCC36, BABAM2 and BABAM1/NBA1. In the BRCA1-A complex, interacts directly with ABRAXAS1, BRCC3/BRCC36 and BABAM1/NBA1. Binds polyubiquitin. Component of the BRISC complex, at least composed of ABRAXAS2, BRCC3/BRCC36, BABAM2 and BABAM1/NBA1. Identified in a complex with SHMT2 and the other subunits of the BRISC complex. Component of the BRCA1/BRCA2 containing complex (BRCC), which also contains BRCA1, BRCA2, BARD1, BRCC3/BRCC36 and RAD51. BRCC is a ubiquitin E3 ligase complex that enhances cellular survival following DNA damage. May interact with FAS and TNFRSF1A.

The protein localises to the cytoplasm. It is found in the nucleus. Component of the BRCA1-A complex, a complex that specifically recognizes 'Lys-63'-linked ubiquitinated histones H2A and H2AX at DNA lesions sites, leading to target the BRCA1-BARD1 heterodimer to sites of DNA damage at double-strand breaks (DSBs). The BRCA1-A complex also possesses deubiquitinase activity that specifically removes 'Lys-63'-linked ubiquitin on histones H2A and H2AX. In the BRCA1-A complex, it acts as an adapter that bridges the interaction between BABAM1/NBA1 and the rest of the complex, thereby being required for the complex integrity and modulating the E3 ubiquitin ligase activity of the BRCA1-BARD1 heterodimer. Component of the BRISC complex, a multiprotein complex that specifically cleaves 'Lys-63'-linked ubiquitin in various substrates. Within the BRISC complex, acts as an adapter that bridges the interaction between BABAM1/NBA1 and the rest of the complex, thereby being required for the complex integrity. The BRISC complex is required for normal mitotic spindle assembly and microtubule attachment to kinetochores via its role in deubiquitinating NUMA1. The BRISC complex plays a role in interferon signaling via its role in the deubiquitination of the interferon receptor IFNAR1; deubiquitination increases IFNAR1 activity by enhancing its stability and cell surface expression. Down-regulates the response to bacterial lipopolysaccharide (LPS) via its role in IFNAR1 deubiquitination. May play a role in homeostasis or cellular differentiation in cells of neural, epithelial and germline origins. May also act as a death receptor-associated anti-apoptotic protein, which inhibits the mitochondrial apoptotic pathway. May regulate TNF-alpha signaling through its interactions with TNFRSF1A; however these effects may be indirect. This chain is BRISC and BRCA1-A complex member 2 (BABAM2), found in Chlorocebus aethiops (Green monkey).